Consider the following 275-residue polypeptide: uncharacterized protein (275 aa).

The protein resides in the virion. This is an uncharacterized protein from Acanthamoeba polyphaga (Amoeba).